The sequence spans 228 residues: Uracil-DNA glycosylase (228 aa).

Asp64 functions as the Proton acceptor in the catalytic mechanism.

This sequence belongs to the uracil-DNA glycosylase (UDG) superfamily. UNG family.

It localises to the cytoplasm. The enzyme catalyses Hydrolyzes single-stranded DNA or mismatched double-stranded DNA and polynucleotides, releasing free uracil.. Excises uracil residues from the DNA which can arise as a result of misincorporation of dUMP residues by DNA polymerase or due to deamination of cytosine. This chain is Uracil-DNA glycosylase, found in Yersinia pseudotuberculosis serotype IB (strain PB1/+).